The following is an 86-amino-acid chain: MDAFDVIKTPIVSEKTMKLIEEENRLVFYVERKATKADIRAAIKELFDAEVADINTSITPKGKKKAYITLKSEYNAGEVAASLGIY.

The protein belongs to the universal ribosomal protein uL23 family. In terms of assembly, part of the 50S ribosomal subunit. Contacts protein L29.

Binds to 23S rRNA. One of the proteins that surrounds the polypeptide exit tunnel on the outside of the ribosome. This chain is Large ribosomal subunit protein uL23, found in Methanococcus maripaludis (strain C7 / ATCC BAA-1331).